A 464-amino-acid polypeptide reads, in one-letter code: tRNA modification GTPase MnmE (464 aa).

(6S)-5-formyl-5,6,7,8-tetrahydrofolate is bound by residues Arg25, Glu87, and Lys130. Residues 226–386 enclose the TrmE-type G domain; it reads GLSVVLAGQP…LRAELLRIAG (161 aa). K(+) is bound at residue Asn236. GTP is bound by residues 236–241, 255–261, and 280–283; these read NVGKSS, TPIAGTT, and DTAG. Ser240 contributes to the Mg(2+) binding site. Thr255, Ile257, and Thr260 together coordinate K(+). Residue Thr261 participates in Mg(2+) binding. Position 464 (Lys464) interacts with (6S)-5-formyl-5,6,7,8-tetrahydrofolate.

Belongs to the TRAFAC class TrmE-Era-EngA-EngB-Septin-like GTPase superfamily. TrmE GTPase family. In terms of assembly, homodimer. Heterotetramer of two MnmE and two MnmG subunits. The cofactor is K(+).

It is found in the cytoplasm. Its function is as follows. Exhibits a very high intrinsic GTPase hydrolysis rate. Involved in the addition of a carboxymethylaminomethyl (cmnm) group at the wobble position (U34) of certain tRNAs, forming tRNA-cmnm(5)s(2)U34. The chain is tRNA modification GTPase MnmE from Burkholderia orbicola (strain AU 1054).